A 289-amino-acid chain; its full sequence is ATP synthase gamma chain (289 aa).

The protein belongs to the ATPase gamma chain family. In terms of assembly, F-type ATPases have 2 components, CF(1) - the catalytic core - and CF(0) - the membrane proton channel. CF(1) has five subunits: alpha(3), beta(3), gamma(1), delta(1), epsilon(1). CF(0) has three main subunits: a, b and c.

Its subcellular location is the cell inner membrane. Produces ATP from ADP in the presence of a proton gradient across the membrane. The gamma chain is believed to be important in regulating ATPase activity and the flow of protons through the CF(0) complex. The chain is ATP synthase gamma chain from Mannheimia succiniciproducens (strain KCTC 0769BP / MBEL55E).